The following is a 405-amino-acid chain: Glucose-1-phosphate adenylyltransferase (405 aa).

Alpha-D-glucose 1-phosphate contacts are provided by residues tyrosine 96, glycine 161, 176–177 (EK), and serine 194.

This sequence belongs to the bacterial/plant glucose-1-phosphate adenylyltransferase family. In terms of assembly, homotetramer.

It carries out the reaction alpha-D-glucose 1-phosphate + ATP + H(+) = ADP-alpha-D-glucose + diphosphate. It participates in glycan biosynthesis; glycogen biosynthesis. Involved in the biosynthesis of ADP-glucose, a building block required for the elongation reactions to produce glycogen. Catalyzes the reaction between ATP and alpha-D-glucose 1-phosphate (G1P) to produce pyrophosphate and ADP-Glc. The sequence is that of Glucose-1-phosphate adenylyltransferase from Aliivibrio fischeri (strain MJ11) (Vibrio fischeri).